The chain runs to 298 residues: Bifunctional protein FolD (298 aa).

Residues 167 to 169 (GRS), S192, and I233 contribute to the NADP(+) site.

Belongs to the tetrahydrofolate dehydrogenase/cyclohydrolase family. Homodimer.

The enzyme catalyses (6R)-5,10-methylene-5,6,7,8-tetrahydrofolate + NADP(+) = (6R)-5,10-methenyltetrahydrofolate + NADPH. It catalyses the reaction (6R)-5,10-methenyltetrahydrofolate + H2O = (6R)-10-formyltetrahydrofolate + H(+). The protein operates within one-carbon metabolism; tetrahydrofolate interconversion. Catalyzes the oxidation of 5,10-methylenetetrahydrofolate to 5,10-methenyltetrahydrofolate and then the hydrolysis of 5,10-methenyltetrahydrofolate to 10-formyltetrahydrofolate. In Caulobacter sp. (strain K31), this protein is Bifunctional protein FolD.